A 55-amino-acid polypeptide reads, in one-letter code: Large ribosomal subunit protein bL33 (55 aa).

It belongs to the bacterial ribosomal protein bL33 family.

This is Large ribosomal subunit protein bL33 from Polaromonas sp. (strain JS666 / ATCC BAA-500).